The chain runs to 280 residues: Pantothenate synthetase (280 aa).

32 to 39 (MGALHAGH) contributes to the ATP binding site. The active-site Proton donor is the His39. Gln63 contacts (R)-pantoate. Gln63 lines the beta-alanine pocket. ATP is bound at residue 149-152 (GEKD). Residue Gln155 participates in (R)-pantoate binding. Residues Val178 and 186–189 (MSSR) contribute to the ATP site.

It belongs to the pantothenate synthetase family. In terms of assembly, homodimer.

It localises to the cytoplasm. The catalysed reaction is (R)-pantoate + beta-alanine + ATP = (R)-pantothenate + AMP + diphosphate + H(+). Its pathway is cofactor biosynthesis; (R)-pantothenate biosynthesis; (R)-pantothenate from (R)-pantoate and beta-alanine: step 1/1. Catalyzes the condensation of pantoate with beta-alanine in an ATP-dependent reaction via a pantoyl-adenylate intermediate. This chain is Pantothenate synthetase, found in Ruegeria sp. (strain TM1040) (Silicibacter sp.).